The primary structure comprises 596 residues: Transcription factor COE3 (596 aa).

The interval methionine 1–serine 22 is disordered. The interaction with DNA stretch occupies residues arginine 63–asparagine 66. The C5-type zinc finger occupies cysteine 151–cysteine 170. Interaction with DNA stretches follow at residues asparagine 197–asparagine 204 and asparagine 236–lysine 239. In terms of domain architecture, IPT/TIG spans proline 263 to threonine 346. Positions threonine 451 to tyrosine 483 are disordered.

This sequence belongs to the COE family. Forms either a homodimer or a heterodimer with a related family member. Expressed in brain.

It localises to the nucleus. Functionally, transcriptional activator. Recognizes variations of the palindromic sequence 5'-ATTCCCNNGGGAATT-3'. This is Transcription factor COE3 (EBF3) from Homo sapiens (Human).